A 434-amino-acid polypeptide reads, in one-letter code: Oxysterol-binding protein homolog 5 (434 aa).

Residues 18-371 form an OSBP-related domain (ORD) region; it reads SSFNGDLSSL…KQVDYMNENT (354 aa). 24–29 lines the a 1,2-diacyl-sn-glycero-3-phospho-(1D-myo-inositol 4-phosphate) pocket; the sequence is LSSLSA. A 20-hydroxycholesterol-binding site is contributed by glutamine 96. 25-hydroxycholesterol is bound at residue glutamine 96. The 7beta-hydroxycholesterol site is built by glutamine 96 and arginine 100. Residue glutamine 96 participates in cholesterol binding. Glutamine 96 provides a ligand contact to ergosterol. A 1,2-diacyl-sn-glycero-3-phospho-(1D-myo-inositol 4-phosphate) contacts are provided by residues 109–112, 143–144, lysine 335, glutamate 339, and arginine 343; these read KPLN and HH. Serine 389 carries the post-translational modification Phosphoserine.

The protein belongs to the OSBP family.

The protein localises to the vacuole membrane. It localises to the bud neck. Functionally, lipid transport protein (LTP) involved in non-vesicular transfer of lipids between membranes. Functions in phosphoinositide-coupled directional transport of various lipids by carrying the lipid molecule in a hydrophobic pocket and transferring it between membranes through the cytosol. Involved in maintenance of intracellular sterol distribution and homeostasis. Plays a role in ergosterol synthesis. Binds and transports sterol. May be involved in ergosterol transport from the plasma membrane (PM) to the ER. This Saccharomyces cerevisiae (strain ATCC 204508 / S288c) (Baker's yeast) protein is Oxysterol-binding protein homolog 5.